Here is a 141-residue protein sequence, read N- to C-terminus: ATP synthase F(0) complex subunit C3, mitochondrial (141 aa).

Residues 1–66 (MFACAKLART…REFQTSVISR (66 aa)) constitute a mitochondrion transit peptide. The helical transmembrane segment at 82 to 102 (VGVAGSGAGIGTVFGSLIIGY) threads the bilayer. N6,N6,N6-trimethyllysine is present on lysine 109. A helical transmembrane segment spans residues 117 to 137 (ILGFALSEAMGLFCLMVAFLI).

The protein belongs to the ATPase C chain family. F-type ATPases have 2 components, CF(1) - the catalytic core - and CF(0) - the membrane proton channel. CF(1) has five subunits: alpha(3), beta(3), gamma(1), delta(1), epsilon(1). CF(0) has three main subunits: a, b and c. Interacts with TMEM70 and TMEM242. In terms of processing, trimethylated by ATPSCKMT at Lys-109. Methylation is required for proper incorporation of the C subunit into the ATP synthase complex and mitochondrial respiration.

The protein resides in the mitochondrion membrane. In terms of biological role, mitochondrial membrane ATP synthase (F(1)F(0) ATP synthase or Complex V) produces ATP from ADP in the presence of a proton gradient across the membrane which is generated by electron transport complexes of the respiratory chain. F-type ATPases consist of two structural domains, F(1) - containing the extramembraneous catalytic core and F(0) - containing the membrane proton channel, linked together by a central stalk and a peripheral stalk. During catalysis, ATP synthesis in the catalytic domain of F(1) is coupled via a rotary mechanism of the central stalk subunits to proton translocation. Part of the complex F(0) domain. A homomeric c-ring of probably 10 subunits is part of the complex rotary element. The polypeptide is ATP synthase F(0) complex subunit C3, mitochondrial (Mus musculus (Mouse)).